A 118-amino-acid chain; its full sequence is Large ribosomal subunit protein bL20 (118 aa).

The protein belongs to the bacterial ribosomal protein bL20 family.

In terms of biological role, binds directly to 23S ribosomal RNA and is necessary for the in vitro assembly process of the 50S ribosomal subunit. It is not involved in the protein synthesizing functions of that subunit. The polypeptide is Large ribosomal subunit protein bL20 (Lactobacillus johnsonii (strain CNCM I-12250 / La1 / NCC 533)).